Consider the following 264-residue polypeptide: Putative hydro-lyase RBAM_004300 (264 aa).

The protein belongs to the D-glutamate cyclase family.

The polypeptide is Putative hydro-lyase RBAM_004300 (Bacillus velezensis (strain DSM 23117 / BGSC 10A6 / LMG 26770 / FZB42) (Bacillus amyloliquefaciens subsp. plantarum)).